A 121-amino-acid chain; its full sequence is Large ribosomal subunit protein bL20c (121 aa).

Belongs to the bacterial ribosomal protein bL20 family.

Its subcellular location is the plastid. It is found in the chloroplast. Binds directly to 23S ribosomal RNA and is necessary for the in vitro assembly process of the 50S ribosomal subunit. It is not involved in the protein synthesizing functions of that subunit. This Lotus japonicus (Lotus corniculatus var. japonicus) protein is Large ribosomal subunit protein bL20c.